Consider the following 425-residue polypeptide: Riboflavin biosynthesis protein RibBA (425 aa).

The tract at residues 1–204 (MTRLDSVERA…IADLIEWRRK (204 aa)) is DHBP synthase. Residues 28–29 (RE), D33, 141–145 (RPGHT), and E165 each bind D-ribulose 5-phosphate. Mg(2+) is bound at residue E29. Residue H144 participates in Mg(2+) binding. Positions 205-425 (HEKHIERIAE…HLPGEFGGAL (221 aa)) are GTP cyclohydrolase II. GTP is bound at residue 259–263 (RVHSE). Residues C264, C275, and C277 each contribute to the Zn(2+) site. GTP is bound by residues Q280, 303 to 305 (EGR), and T325. Catalysis depends on D337, which acts as the Proton acceptor; for GTP cyclohydrolase activity. R339 serves as the catalytic Nucleophile; for GTP cyclohydrolase activity. GTP-binding residues include T360 and K365.

The protein in the N-terminal section; belongs to the DHBP synthase family. It in the C-terminal section; belongs to the GTP cyclohydrolase II family. The cofactor is Mg(2+). Requires Mn(2+) as cofactor. It depends on Zn(2+) as a cofactor.

It carries out the reaction D-ribulose 5-phosphate = (2S)-2-hydroxy-3-oxobutyl phosphate + formate + H(+). The enzyme catalyses GTP + 4 H2O = 2,5-diamino-6-hydroxy-4-(5-phosphoribosylamino)-pyrimidine + formate + 2 phosphate + 3 H(+). Its pathway is cofactor biosynthesis; riboflavin biosynthesis; 2-hydroxy-3-oxobutyl phosphate from D-ribulose 5-phosphate: step 1/1. The protein operates within cofactor biosynthesis; riboflavin biosynthesis; 5-amino-6-(D-ribitylamino)uracil from GTP: step 1/4. Its function is as follows. Catalyzes the conversion of D-ribulose 5-phosphate to formate and 3,4-dihydroxy-2-butanone 4-phosphate. In terms of biological role, catalyzes the conversion of GTP to 2,5-diamino-6-ribosylamino-4(3H)-pyrimidinone 5'-phosphate (DARP), formate and pyrophosphate. This chain is Riboflavin biosynthesis protein RibBA, found in Mycolicibacterium paratuberculosis (strain ATCC BAA-968 / K-10) (Mycobacterium paratuberculosis).